The sequence spans 399 residues: MSKAENTSGKQQLILRLSADTSDSLEWLIWSVSRHQTLTTGSGTLESLQAVLADYPVISARVLVPSTDVTFHTLSLPRQSRRQLLQAIPFMLEEQVASDIDQLHFAVMDMHGDNATVAVVQKSRLRAWLNQCETLGVPVETVVPDVMALPRADSAWSAISHRNLWLFRLDSGIGMAAEENWYQSLLAFQPLPAVHCYSPVPASALTWQPQPVTDLLTLAAQVNLSMSMDLRQGEYAPVKPWKQALLPWRNVLIALSAWLLLVLGESVWTHYQWYRQADYWRQESVRVYRKLFPDEKQVVNPRAQMQRHLQEVRAGVSGFALTEQMNRLQQLVAQNEGVSLQSLSYDRSRDELRLSLRATSYAQMEQFRQQAQAYFQIPPGEMKQEKDHVEGQLTLRSQP.

Residues 1-247 (MSKAENTSGK…VKPWKQALLP (247 aa)) lie on the Cytoplasmic side of the membrane. A helical transmembrane segment spans residues 248–264 (WRNVLIALSAWLLLVLG). Residues 265–399 (ESVWTHYQWY…EGQLTLRSQP (135 aa)) are Periplasmic-facing.

It belongs to the GSP L family. As to quaternary structure, type II secretion system is composed of four main components: the outer membrane complex, the inner membrane complex, the cytoplasmic secretion ATPase and the periplasm-spanning pseudopilus. Forms homodimers. Interacts with OutM/GspM. Interacts with OutE/GspE and OutF/GspF.

It localises to the cell inner membrane. Its function is as follows. Inner membrane component of the type II secretion system required for the energy-dependent secretion of extracellular factors such as proteases and toxins from the periplasm. Plays a role in the complex assembly and recruits OutM resulting in a stable complex in the inner membrane. Provides thus a link between the energy-providing OutE protein in the cytoplasm and the rest of the T2SS machinery. In Dickeya chrysanthemi (Pectobacterium chrysanthemi), this protein is Type II secretion system protein L (outL).